The primary structure comprises 323 residues: NADH-cytochrome b5 reductase 2 (323 aa).

The chain crosses the membrane as a helical span at residues 32–48; it reads LAPIYLGVGLIGLGVGL. Residues 72–177 form the FAD-binding FR-type domain; the sequence is QGWVDLKLAQ…KGPIPKYPWE (106 aa). FAD is bound at residue 180-215; it reads KHKHICLIAGGTGITPMYQLARKIFKDPEDQTKVTL.

The protein belongs to the flavoprotein pyridine nucleotide cytochrome reductase family. It depends on FAD as a cofactor.

The protein resides in the mitochondrion outer membrane. It carries out the reaction 2 Fe(III)-[cytochrome b5] + NADH = 2 Fe(II)-[cytochrome b5] + NAD(+) + H(+). May mediate the reduction of outer membrane cytochrome b5. The sequence is that of NADH-cytochrome b5 reductase 2 (mcr1) from Aspergillus fumigatus (strain ATCC MYA-4609 / CBS 101355 / FGSC A1100 / Af293) (Neosartorya fumigata).